Reading from the N-terminus, the 119-residue chain is Small ribosomal subunit protein bS6 (119 aa).

The tract at residues 95–119 is disordered; it reads AVTEPSPLAKGNEKREDRKESEDAE. A compositionally biased stretch (basic and acidic residues) spans 105-119; the sequence is GNEKREDRKESEDAE.

It belongs to the bacterial ribosomal protein bS6 family.

In terms of biological role, binds together with bS18 to 16S ribosomal RNA. This chain is Small ribosomal subunit protein bS6, found in Halorhodospira halophila (strain DSM 244 / SL1) (Ectothiorhodospira halophila (strain DSM 244 / SL1)).